Consider the following 328-residue polypeptide: MKKIAVYTSGGDAPGMNACIRAAVRAGHYHNLEVYGIVRGYDGMINGNFIELDNRAVSNIIQKGGTILKSARSEEFRSPEGRRKAFDQIQKFGIDGLVAIGGNGTFTGAELFYNEYQIPCVGAPGTIDNDLYGSDFTIGYDTAVNTCLAAIDKIRDTADAHERVFFIEVMGRDTGYIAVRSAISGGAEMAIIPEFPYDKNVVINRLKHGTSDTKASHIIIVAEGHQEGRASMIARDIKEALPQLDCRVTTLGHVQRGGGPSAADRVLASRLGLATVEGLLEGRANVMAGIIDHKVVYTPFIDTITKRKPINEDLLSLAEKLNGRSYKV.

Residue glycine 11 coordinates ATP. 21-25 (RAAVR) lines the ADP pocket. Residues 72 to 73 (RS) and 102 to 105 (GNGT) each bind ATP. A Mg(2+)-binding site is contributed by asparagine 103. Residue 126 to 128 (TID) coordinates substrate. The Proton acceptor role is filled by aspartate 128. Arginine 155 is a binding site for ADP. Residues arginine 163 and 170 to 172 (MGR) each bind substrate. ADP contacts are provided by residues 186–188 (GAE) and 214–216 (KAS). Substrate contacts are provided by residues glutamate 223, arginine 247, and 253–256 (HVQR).

The protein belongs to the phosphofructokinase type A (PFKA) family. ATP-dependent PFK group I subfamily. Prokaryotic clade 'B1' sub-subfamily. In terms of assembly, homotetramer. Mg(2+) is required as a cofactor.

The protein localises to the cytoplasm. The enzyme catalyses beta-D-fructose 6-phosphate + ATP = beta-D-fructose 1,6-bisphosphate + ADP + H(+). It functions in the pathway carbohydrate degradation; glycolysis; D-glyceraldehyde 3-phosphate and glycerone phosphate from D-glucose: step 3/4. Allosterically activated by ADP and other diphosphonucleosides, and allosterically inhibited by phosphoenolpyruvate. In terms of biological role, catalyzes the phosphorylation of D-fructose 6-phosphate to fructose 1,6-bisphosphate by ATP, the first committing step of glycolysis. This Cytophaga hutchinsonii (strain ATCC 33406 / DSM 1761 / CIP 103989 / NBRC 15051 / NCIMB 9469 / D465) protein is ATP-dependent 6-phosphofructokinase.